The chain runs to 211 residues: Ferritin heavy chain (211 aa).

The N-terminal stretch at 1 to 20 (MNSILLVFAGILAVCLPASA) is a signal peptide. The region spanning 35-191 (ITMHRSCRNS…GKASTLKKLM (157 aa)) is the Ferritin-like diiron domain. A disulfide bridge connects residues Cys-41 and Cys-150. 5 residues coordinate Fe cation: Glu-52, Glu-87, His-90, Glu-136, and Gln-173.

Belongs to the ferritin family. Oligomer of 12 light (L) chains and 12 heavy (H) chains; L and H chains are disulfide-linked. The functional molecule forms a roughly spherical shell with a diameter of 12 nm and contains a central cavity into which the insoluble ferric iron core is deposited.

It is found in the golgi apparatus. The protein localises to the secreted. It carries out the reaction 4 Fe(2+) + O2 + 4 H(+) = 4 Fe(3+) + 2 H2O. Functionally, stores iron in a soluble, non-toxic, readily available form. Important for iron homeostasis. Iron is taken up in the ferrous form and deposited as ferric hydroxides after oxidation. Ferritin is composed of a heavy (H) chain which is responsible for the oxidation and uptake of ferrous iron, and a light (L) chain which facilitates the nucleation of the ferrihydrite iron core. The protein is Ferritin heavy chain of Trichoplusia ni (Cabbage looper).